A 96-amino-acid polypeptide reads, in one-letter code: Small ribosomal subunit protein bS18 (96 aa).

It belongs to the bacterial ribosomal protein bS18 family. In terms of assembly, part of the 30S ribosomal subunit. Forms a tight heterodimer with protein bS6.

Functionally, binds as a heterodimer with protein bS6 to the central domain of the 16S rRNA, where it helps stabilize the platform of the 30S subunit. This is Small ribosomal subunit protein bS18 from Borreliella afzelii (strain PKo) (Borrelia afzelii).